The chain runs to 225 residues: Small ribosomal subunit protein uS5 (225 aa).

The S5 DRBM domain maps to 57–120; it reads LEEQVLDVKL…AQAKLSLIKV (64 aa).

The protein belongs to the universal ribosomal protein uS5 family. As to quaternary structure, part of the 30S ribosomal subunit. Contacts protein S4.

Its function is as follows. With S4 and S12 plays an important role in translational accuracy. This Methanococcus vannielii (strain ATCC 35089 / DSM 1224 / JCM 13029 / OCM 148 / SB) protein is Small ribosomal subunit protein uS5.